The following is a 28-amino-acid chain: Conotoxin Vi14b (28 aa).

Intrachain disulfides connect C4/C21 and C7/C18. K15 and K25 each carry N6-acetyllysine.

Post-translationally, the two N6-acetyllysines at position 15 and 25 have been deduced from the mass difference of 42. They are not common in venom proteins. In terms of tissue distribution, expressed by the venom gland.

The protein resides in the secreted. Functionally, in vitro, inhibits proliferation of the mice ovarian cancer cells ID8. This chain is Conotoxin Vi14b, found in Conus virgo (Virgin cone).